A 128-amino-acid chain; its full sequence is Small ribosomal subunit protein eS8 (128 aa).

It belongs to the eukaryotic ribosomal protein eS8 family. In terms of assembly, part of the 30S ribosomal subunit.

This Methanococcus maripaludis (strain DSM 14266 / JCM 13030 / NBRC 101832 / S2 / LL) protein is Small ribosomal subunit protein eS8.